We begin with the raw amino-acid sequence, 405 residues long: Cellobiose 2-epimerase (405 aa).

This sequence belongs to the cellobiose 2-epimerase family.

It catalyses the reaction D-cellobiose = beta-D-glucosyl-(1-&gt;4)-D-mannopyranose. Its function is as follows. Catalyzes the reversible epimerization of cellobiose to 4-O-beta-D-glucopyranosyl-D-mannose (Glc-Man). Can also epimerize lactose to epilactose. The chain is Cellobiose 2-epimerase (ce13) from Eubacterium cellulosolvens.